Consider the following 634-residue polypeptide: Knob-associated histidine-rich protein (634 aa).

The first 34 residues, 1–34, serve as a signal peptide directing secretion; the sequence is MKSFKNKNTLRRKKAFPVFTKILLVSFLVWVLKC. A glycan (N-linked (GlcNAc...) asparagine) is linked at asparagine 42. Residues 57-87 are compositionally biased toward basic residues; sequence AQKQHEHHHHHHHQHQHQHQAPHQAHHHHHH. Disordered stretches follow at residues 57 to 143 and 347 to 634; these read AQKQ…QVFR and SSVN…GCCG. Low complexity predominate over residues 95-104; that stretch reads PQVHQQVHGQ. The span at 108–117 shows a compositional bias: basic residues; it reads HHHHHHHHHQ. Basic and acidic residues-rich tracts occupy residues 354–375 and 396–405; these read KHGD…EGEK and KDNEDAESVK. Basic residues predominate over residues 406 to 422; that stretch reads SKKHKSHDCEKKKSKKH. 2 stretches are compositionally biased toward basic and acidic residues: residues 423-444 and 453-493; these read KDNE…GEKH and KTNE…KKVD. Residues 494–505 are compositionally biased toward polar residues; that stretch reads STSADNKSTNAA. Over residues 509–520 the composition is skewed to basic and acidic residues; it reads AKDKTQGGKTDK. 4 consecutive repeat copies span residues 540-549, 550-559, 560-569, and 570-579. The interval 540–580 is 4 X 10 AA tandem repeats of [TS]-[KE]-[GE]-A-T-K-[EG]-A-S-T; that stretch reads TKGATKEASTSKEATKEASTSKGATKEASTTEGATKGASTT. The segment covering 567–591 has biased composition (low complexity); it reads ASTTEGATKGASTTAGSTTGATTGA. Polar residues predominate over residues 605 to 620; it reads AANNGEQVMSRGQAQL. Basic residues predominate over residues 625 to 634; sequence KKKKKRGCCG.

The protein resides in the secreted. In terms of biological role, KAHRP might mimick human histidine-rich glycoproteins to anchor host thrombospondin or a parasite analog in a binding complex with the endothelial cell receptor. This Plasmodium falciparum (isolate FCR-3 / Gambia) protein is Knob-associated histidine-rich protein.